A 251-amino-acid chain; its full sequence is Ubiquinone biosynthesis O-methyltransferase (251 aa).

The S-adenosyl-L-methionine site is built by arginine 36, glycine 61, aspartate 82, and isoleucine 124.

The protein belongs to the methyltransferase superfamily. UbiG/COQ3 family.

The catalysed reaction is a 3-demethylubiquinol + S-adenosyl-L-methionine = a ubiquinol + S-adenosyl-L-homocysteine + H(+). The enzyme catalyses a 3-(all-trans-polyprenyl)benzene-1,2-diol + S-adenosyl-L-methionine = a 2-methoxy-6-(all-trans-polyprenyl)phenol + S-adenosyl-L-homocysteine + H(+). Its pathway is cofactor biosynthesis; ubiquinone biosynthesis. Its function is as follows. O-methyltransferase that catalyzes the 2 O-methylation steps in the ubiquinone biosynthetic pathway. In Rickettsia akari (strain Hartford), this protein is Ubiquinone biosynthesis O-methyltransferase.